Here is a 434-residue protein sequence, read N- to C-terminus: Trehalose-phosphatase (434 aa).

Residues Asp-156 and Asp-158 each coordinate Mg(2+). Residue Asp-158 is the Proton donor/acceptor of the active site. Gln-275–Lys-277 contacts substrate. A Mg(2+)-binding site is contributed by Asp-366.

Belongs to the gob-1 trehalose phosphatase family. Mg(2+) serves as cofactor.

The catalysed reaction is alpha,alpha-trehalose 6-phosphate + H2O = alpha,alpha-trehalose + phosphate. Functionally, catalyzes the hydrolysis of trehalose 6-phosphate to trehalose and phosphate; prevents the accumulation of toxic levels of trehalose 6-phosphate. This is Trehalose-phosphatase (gob-1) from Caenorhabditis briggsae.